A 76-amino-acid polypeptide reads, in one-letter code: Small ribosomal subunit protein bS18 (76 aa).

This sequence belongs to the bacterial ribosomal protein bS18 family. Part of the 30S ribosomal subunit. Forms a tight heterodimer with protein bS6.

Binds as a heterodimer with protein bS6 to the central domain of the 16S rRNA, where it helps stabilize the platform of the 30S subunit. The polypeptide is Small ribosomal subunit protein bS18 (Desulfitobacterium hafniense (strain Y51)).